The following is an 88-amino-acid chain: Small ribosomal subunit protein bS20 (88 aa).

The tract at residues 1–25 (MANSAQARKRARQAVAQNAHNSSLR) is disordered.

The protein belongs to the bacterial ribosomal protein bS20 family.

Its function is as follows. Binds directly to 16S ribosomal RNA. The sequence is that of Small ribosomal subunit protein bS20 from Cupriavidus pinatubonensis (strain JMP 134 / LMG 1197) (Cupriavidus necator (strain JMP 134)).